Consider the following 635-residue polypeptide: Extracellular metalloproteinase 1 (635 aa).

The signal sequence occupies residues 1 to 19 (MHGLLLAAGLLSLPLHVLA). A propeptide spanning residues 20 to 246 (HPQPSTSTSL…VHNVVDYVAH (227 aa)) is cleaved from the precursor. N-linked (GlcNAc...) asparagine glycosylation occurs at N287. A Zn(2+)-binding site is contributed by H430. E431 is a catalytic residue. H434 contributes to the Zn(2+) binding site. N475, N594, and N623 each carry an N-linked (GlcNAc...) asparagine glycan.

The protein belongs to the peptidase M36 family. Zn(2+) is required as a cofactor.

It localises to the secreted. Its function is as follows. Secreted metalloproteinase probably acting as a virulence factor. The chain is Extracellular metalloproteinase 1 (MEP1) from Trichophyton rubrum (Athlete's foot fungus).